The chain runs to 291 residues: Protease HtpX (291 aa).

Helical transmembrane passes span 4-24 (IALFLATNLAVMIVFSIVLNI) and 36-56 (LSGLLVMAVLFGFGGSLISLM). His143 serves as a coordination point for Zn(2+). Glu144 is an active-site residue. Zn(2+) is bound at residue His147. The next 2 membrane-spanning stretches (helical) occupy residues 151–171 (GDMITMTLMQGVVNTFVIFLS) and 199–219 (FIVSTILELAFGFLASFLTMW). Glu225 contributes to the Zn(2+) binding site.

The protein belongs to the peptidase M48B family. It depends on Zn(2+) as a cofactor.

It localises to the cell inner membrane. In Aliivibrio fischeri (strain MJ11) (Vibrio fischeri), this protein is Protease HtpX.